A 475-amino-acid chain; its full sequence is Glutamate--tRNA ligase (475 aa).

The short motif at 11 to 21 (PSPTGFLHIGG) is the 'HIGH' region element. The 'KMSKS' region signature appears at 240–244 (KLSKR). Residue lysine 243 coordinates ATP.

The protein belongs to the class-I aminoacyl-tRNA synthetase family. Glutamate--tRNA ligase type 1 subfamily. In terms of assembly, monomer.

It localises to the cytoplasm. The catalysed reaction is tRNA(Glu) + L-glutamate + ATP = L-glutamyl-tRNA(Glu) + AMP + diphosphate. Functionally, catalyzes the attachment of glutamate to tRNA(Glu) in a two-step reaction: glutamate is first activated by ATP to form Glu-AMP and then transferred to the acceptor end of tRNA(Glu). This Bradyrhizobium diazoefficiens (strain JCM 10833 / BCRC 13528 / IAM 13628 / NBRC 14792 / USDA 110) protein is Glutamate--tRNA ligase.